The primary structure comprises 99 residues: Acylphosphatase-2 (99 aa).

Serine 2 bears the N-acetylserine mark. Positions 9–99 (SVDYEVFGRV…LEYSSFNIRY (91 aa)) constitute an Acylphosphatase-like domain. Active-site residues include arginine 24 and asparagine 42. Residue serine 93 is modified to Phosphoserine.

The protein belongs to the acylphosphatase family.

It catalyses the reaction an acyl phosphate + H2O = a carboxylate + phosphate + H(+). Functionally, its physiological role is not yet clear. The sequence is that of Acylphosphatase-2 (ACYP2) from Bos taurus (Bovine).